Consider the following 843-residue polypeptide: MPLSYQHFRKLLLLDDEAGPLEDELPRLADEGLNRRVAEDLNLGNLNVSIPWTHKVGNFTGLYSSTVPVFNPEWQTPSFPHIHLQEDIINRCQQYVGPLTVNEKRRLKLIMPARFYPNLTKYLPLDKGIKPYYPEHAVNHYFKTRHYLHTLWKAGILYKRETTRSASFCGSPYSWEQELQHGRLVFQTSTRHGDESFCSQSSGILSRSPFGPCVRSQLKQSRLGLQPQQGSLAKGKSGQSGSIRARVHPTTLQSFGVEPSGSGHIDNGASSTSSCLLQSAVRKTAYSHLSTFKRQSSSGHAVELHNLPPNSARSQSERPIFPCWWLQFRNSKPCSDYCLSHIVNLLEDWGPCTEHGEHHIRIPRTPARVTGGVFLVDKNPHNTAESRLVVDFSQFSRGNYRVSWPKFAVPNLQSLTNLLSSNLSWLSLDVSAAFYHIPLHPAAMPHLLVGSSGLSRYVARLSSNSRIFNHQHGTLQNLHDSCSRNLYVSLLLLYKTFGRKLHLYSHPIILGFRKIPMGVGLSPFLLAQFTSAICSVVRRAFPHCLAFSYMDDVVLGAKSVQHLESLFTAVTNFLLSLGIHLNPNKTKRWGYSLNFMGYVIGCYGSLPQSHIIQKIKECFRKLPVNRPIDWKVCQRIVGLLGFAAPFTQCGYPALLPLYACIQSKQAFIFSPTYKAFLCQQYMNLYPVARQRPGLCQVFADATPTGWGLVMGHQRMRGTFVAPLPIHTAELLAACFARSRSGANILGTDNSVVLARKYTSFPWLLGCAANWILRGTSFVYVPSALNPADDPSRGRLGLYRPLLHLPFRPTTGRTSLYAVSPSVPSHLPDRVHFASPLHVAWKPP.

Residues 1–177 form a terminal protein domain (TP) region; it reads MPLSYQHFRK…FCGSPYSWEQ (177 aa). The interval 178 to 346 is spacer; that stretch reads ELQHGRLVFQ…YCLSHIVNLL (169 aa). Positions 347 to 690 are polymerase/reverse transcriptase domain (RT); it reads EDWGPCTEHG…YMNLYPVARQ (344 aa). One can recognise a Reverse transcriptase domain in the interval 357–600; sequence EHHIRIPRTP…YSLNFMGYVI (244 aa). Mg(2+)-binding residues include D429, D551, and D552.

This sequence belongs to the hepadnaviridae P protein family.

It catalyses the reaction DNA(n) + a 2'-deoxyribonucleoside 5'-triphosphate = DNA(n+1) + diphosphate. The enzyme catalyses Endonucleolytic cleavage to 5'-phosphomonoester.. Its activity is regulated as follows. Activated by host HSP70 and HSP40 in vitro to be able to bind the epsilon loop of the pgRNA. Because deletion of the RNase H region renders the protein partly chaperone-independent, the chaperones may be needed indirectly to relieve occlusion of the RNA-binding site by this domain. Inhibited by several reverse-transcriptase inhibitors: Lamivudine, Adefovir and Entecavir. Functionally, multifunctional enzyme that converts the viral RNA genome into dsDNA in viral cytoplasmic capsids. This enzyme displays a DNA polymerase activity that can copy either DNA or RNA templates, and a ribonuclease H (RNase H) activity that cleaves the RNA strand of RNA-DNA heteroduplexes in a partially processive 3'- to 5'-endonucleasic mode. Neo-synthesized pregenomic RNA (pgRNA) are encapsidated together with the P protein, and reverse-transcribed inside the nucleocapsid. Initiation of reverse-transcription occurs first by binding the epsilon loop on the pgRNA genome, and is initiated by protein priming, thereby the 5'-end of (-)DNA is covalently linked to P protein. Partial (+)DNA is synthesized from the (-)DNA template and generates the relaxed circular DNA (RC-DNA) genome. After budding and infection, the RC-DNA migrates in the nucleus, and is converted into a plasmid-like covalently closed circular DNA (cccDNA). The activity of P protein does not seem to be necessary for cccDNA generation, and is presumably released from (+)DNA by host nuclear DNA repair machinery. The chain is Protein P from Homo sapiens (Human).